A 170-amino-acid polypeptide reads, in one-letter code: Cathelicidin antimicrobial peptide (170 aa).

Positions 1–30 are cleaved as a signal peptide; the sequence is MKTQRDGPSLGRWSLLLLLLGLTMPLAVIG. A propeptide spans 31–131 (cathelin-like domain (CLD)); that stretch reads RVLSYQEAVL…DISCDKDKRK (101 aa). The cathelin-like domain (CLD) stretch occupies residues 31-131; the sequence is RVLSYQEAVL…DISCDKDKRK (101 aa). Intrachain disulfides connect Cys86/Cys97 and Cys108/Cys125. Residues 150–162 form an active core region; it reads LKKIGQKIKDFFG.

The protein belongs to the cathelicidin family. In terms of assembly, monomer, homodimer or homotrimer (in vitro). Oligomerizes as tetra- or hexamer in solution (in vitro). Post-translationally, proteolytically cleaved by proteinase PRTN3 into antibacterial peptide LL-37. Proteolytically cleaved by cathepsin CTSG and neutrophil elastase ELANE. Resistant to proteolytic degradation in solution, and when bound to both zwitterionic (mimicking mammalian membranes) and negatively charged membranes (mimicking bacterial membranes). In terms of processing, after secretion onto the skin surface, the CAMP gene product is processed by a serine protease-dependent mechanism into multiple novel antimicrobial peptides distinct from and shorter than cathelicidin LL-37. These peptides show enhanced antimicrobial action, acquiring the ability to kill skin pathogens such as S.aureus, E.coli and C.albicans. These peptides have lost the ability to stimulate CXCL8/IL8 release from keratinocytes. The peptides act synergistically, killing bacteria at lower concentrations when present together, and maintain activity at increased salt condition.

It localises to the secreted. It is found in the vesicle. Its function is as follows. Antimicrobial protein that is an integral component of the innate immune system. Binds to bacterial lipopolysaccharides (LPS). Acts via neutrophil N-formyl peptide receptors to enhance the release of CXCL2. Postsecretory processing generates multiple cathelicidin antimicrobial peptides with various lengths which act as a topical antimicrobial defense in sweat on skin. The unprocessed precursor form, cathelicidin antimicrobial peptide, inhibits the growth of Gram-negative E.coli and E.aerogenes with efficiencies comparable to that of the mature peptide LL-37 (in vitro). Functionally, antimicrobial peptide that is an integral component of the innate immune system. Binds to bacterial lipopolysaccharides (LPS). Causes membrane permeabilization by forming transmembrane pores (in vitro). Causes lysis of E.coli. Exhibits antimicrobial activity against Gram-negative bacteria such as P.aeruginosa, S.typhimurium, E.aerogenes, E.coli and P.syringae, Gram-positive bacteria such as L.monocytogenes, S.epidermidis, S.pyogenes and S.aureus, as well as vancomycin-resistant enterococci (in vitro). Exhibits antimicrobial activity against methicillin-resistant S.aureus, P.mirabilis, and C.albicans in low-salt media, but not in media containing 100 mM NaCl (in vitro). Forms chiral supramolecular assemblies with quinolone signal (PQS) molecules of P.aeruginosa, which may lead to interference of bacterial quorum signaling and perturbance of bacterial biofilm formation. May form supramolecular fiber-like assemblies on bacterial membranes. Induces cytokine and chemokine producation as well as TNF/TNFA and CSF2/GMCSF production in normal human keratinocytes. Exhibits hemolytic activity against red blood cells. Exhibits antimicrobial activity against E.coli and B.megaterium (in vitro). The protein is Cathelicidin antimicrobial peptide of Saguinus oedipus (Cotton-top tamarin).